Reading from the N-terminus, the 933-residue chain is Progesterone receptor (933 aa).

An AF3; mediates transcriptional activation region spans residues 1-164 (MTELKAKGPR…PATQGVLSPL (164 aa)). Positions 1–256 (MTELKAKGPR…AAAGGGAAAV (256 aa)) are disordered. Residues 1–566 (MTELKAKGPR…YSFESLPQKI (566 aa)) are modulating, Pro-Rich. The residue at position 20 (S20) is a Phosphoserine. Positions 55 to 59 (LDGLL) match the LXXL motif 1 motif. S81 is modified (phosphoserine). An LXXL motif 2 motif is present at residues 115–119 (LDTLL). 2 positions are modified to phosphoserine: S130 and S162. Residues 165-305 (MSRSGCKAGD…LATTMMDFIH (141 aa)) are mediates transcriptional transrepression. The Nuclear localization signal signature appears at 183–187 (KVLPR). 2 positions are modified to phosphoserine: S190 and S213. Residues 220–231 (EVEEEDGSESEE) are compositionally biased toward acidic residues. Positions 232-246 (SAGPLLKGKPRALGG) are enriched in low complexity. S294 is subject to Phosphoserine; by MAPK1. The interval 331–378 (GGAGAASAFAPPRSSPSASSTPVAVGDFPDCAYPPDAEPKDDAYPLYS) is disordered. The span at 335–350 (AASAFAPPRSSPSASS) shows a compositional bias: low complexity. S345 is modified (phosphoserine; by MAPK). A Glycyl lysine isopeptide (Lys-Gly) (interchain with G-Cter in SUMO); alternate cross-link involves residue K388. Residue K388 forms a Glycyl lysine isopeptide (Lys-Gly) (interchain with G-Cter in ubiquitin); alternate linkage. Position 400 is a phosphoserine; by CDK2 (S400). A disordered region spans residues 415–452 (PDFPLGPPPPLPPRAPPSRPGEAAVTAAPASASVSSAS). The segment covering 418 to 433 (PLGPPPPLPPRAPPSR) has biased composition (pro residues). The span at 434–452 (PGEAAVTAAPASASVSSAS) shows a compositional bias: low complexity. Residues 456-546 (STLECILYKA…VYPPYLNYLR (91 aa)) are AF1; mediates transcriptional activation. K531 is covalently cross-linked (Glycyl lysine isopeptide (Lys-Gly) (interchain with G-Cter in SUMO)). 2 NR C4-type zinc fingers span residues 567-587 (CLICGDEASGCHYGVLTCGSC) and 603-627 (CAGRNDCIVDKIRRKNCPACRLRKC). The nuclear receptor DNA-binding region spans 567 to 639 (CLICGDEASG…AGMVLGGRKF (73 aa)). The residue at position 676 (S676) is a Phosphoserine. Residues 679–913 (QDIQLIPPLI…EFPEMMSEVI (235 aa)) enclose the NR LBD domain. An AF2; mediates transcriptional activation region spans residues 687–933 (LINLLMSIEP…MVKPLLFHKK (247 aa)). R766 is a binding site for progesterone.

It belongs to the nuclear hormone receptor family. Interacts with SMARD1 and UNC45A. Interacts with CUEDC2; the interaction promotes ubiquitination, decreases sumoylation, and represses transcriptional activity. Interacts with PIAS3; the interaction promotes sumoylation of PR in a hormone-dependent manner, inhibits DNA-binding, and alters nuclear export. Interacts with SP1; the interaction requires ligand-induced phosphorylation on Ser-345 by ERK1/2-MAPK. Interacts with PRMT2. Interacts with NCOA2 and NCOA1. Interacts with KLF9. Interacts with GTF2B. Post-translationally, phosphorylated on multiple serine sites. Several of these sites are hormone-dependent. Phosphorylation on Ser-294 is highly hormone-dependent and modulates ubiquitination and sumoylation on Lys-388. Phosphorylation on Ser-102 and Ser-345 also requires induction by hormone. Basal phosphorylation on Ser-81, Ser-162, Ser-190 and Ser-400 is increased in response to progesterone and can be phosphorylated in vitro by the CDK2-A1 complex. Increased levels of phosphorylation on Ser-400 also in the presence of EGF, heregulin, IGF, PMA and FBS. Phosphorylation at this site by CDK2 is ligand-independent, and increases nuclear translocation and transcriptional activity. Phosphorylation at Ser-162 and Ser-294, but not at Ser-190, is impaired during the G(2)/M phase of the cell cycle. Phosphorylation on Ser-345 by ERK1/2 MAPK is required for interaction with SP1. In terms of processing, sumoylation is hormone-dependent and represses transcriptional activity. Sumoylation on all three sites is enhanced by PIAS3. Desumoylated by SENP1. Sumoylation on Lys-388, the main site of sumoylation, is repressed by ubiquitination on the same site, and modulated by phosphorylation at Ser-294. Ubiquitination is hormone-dependent and represses sumoylation on the same site. Promoted by MAPK-mediated phosphorylation on Ser-294. Ubiquitinated by UBR5, leading to its degradation: UBR5 specifically recognizes and binds ligand-bound PGR when it is not associated with coactivators (NCOAs). In presence of NCOAs, the UBR5-degron is not accessible, preventing its ubiquitination and degradation. Post-translationally, palmitoylated by ZDHHC7 and ZDHHC21. Palmitoylation is required for plasma membrane targeting and for rapid intracellular signaling via ERK and AKT kinases and cAMP generation.

It localises to the nucleus. The protein resides in the cytoplasm. Functionally, the steroid hormones and their receptors are involved in the regulation of eukaryotic gene expression and affect cellular proliferation and differentiation in target tissues. Transcriptional activator of several progesteron-dependent promoters in a variety of cell types. Involved in activation of SRC-dependent MAPK signaling on hormone stimulation. The protein is Progesterone receptor (PGR) of Pan paniscus (Pygmy chimpanzee).